We begin with the raw amino-acid sequence, 368 residues long: UDP-galactose/UDP-N-acetylglucosamine transporter srf-3 (368 aa).

8 helical membrane passes run 72 to 92, 118 to 138, 145 to 165, 174 to 194, 203 to 223, 235 to 254, 273 to 293, and 317 to 337; these read FVST…CLFL, LKVC…YVAA, TFMI…VIIL, WFAL…GTKA, FVGF…GIYF, LWMR…FSAI, SIVW…AVCI, and IFLF…LVIF.

Belongs to the nucleotide-sugar transporter family. SLC35A subfamily. As to expression, expressed exclusively in pharyngeal cells g1 and g2, lateral seam cells, spermatheca and vas deferens.

It is found in the golgi apparatus membrane. Functionally, acts as a transporter of both UDP-galactose and UDP-N-acetylglucosamine into the Golgi lumen. Apparently transports UDP-galactose and UDP-N-acetylglucosamine simultaneously, and independently, by an unknown mechanism. Functions redundantly with nucleotide sugar transporter nstp-4. May be involved in gonadal development. This chain is UDP-galactose/UDP-N-acetylglucosamine transporter srf-3 (srf-3), found in Caenorhabditis elegans.